Here is a 399-residue protein sequence, read N- to C-terminus: N-acetylglucosamine-6-phosphate deacetylase (399 aa).

Residues His-65, His-67, and Glu-135 each coordinate a divalent metal cation. 146–147 contacts substrate; that stretch reads AH. His-201 and His-222 together coordinate a divalent metal cation. Substrate is bound by residues 225–226, Arg-233, and 254–257; these read NG and DGHH. Asp-279 lines the a divalent metal cation pocket. The active-site Proton donor/acceptor is the Asp-279. 312-314 contributes to the substrate binding site; the sequence is LAG.

It belongs to the metallo-dependent hydrolases superfamily. NagA family. Homodimer. A divalent metal cation serves as cofactor.

The catalysed reaction is N-acetyl-D-glucosamine 6-phosphate + H2O = D-glucosamine 6-phosphate + acetate. Its pathway is amino-sugar metabolism; N-acetylneuraminate degradation; D-fructose 6-phosphate from N-acetylneuraminate: step 4/5. Involved in the first committed step in the biosynthesis of amino-sugar-nucleotides. Catalyzes the hydrolysis of the N-acetyl group of N-acetylglucosamine-6-phosphate (GlcNAc-6-P) to yield glucosamine 6-phosphate and acetate. The chain is N-acetylglucosamine-6-phosphate deacetylase (manD) from Vibrio furnissii.